A 461-amino-acid polypeptide reads, in one-letter code: Lysosomal proton-coupled steroid conjugate and bile acid symporter SLC46A3 (461 aa).

The signal sequence occupies residues 1–25 (MKILFVEPAIFLSAFAMTLTGPLTT). Over 26–73 (QYVYRRIWEETGNYTFSSDSNISECEKNKSSPIFAFQEEVQKKVSRFN) the chain is Extracellular. N-linked (GlcNAc...) asparagine glycosylation is found at Asn-38, Asn-46, and Asn-53. Residues 74–94 (LQMDISGLIPGLVSTFILLSI) form a helical membrane-spanning segment. Over 95–101 (SDHYGRK) the chain is Cytoplasmic. The chain crosses the membrane as a helical span at residues 102-124 (FPMILSSVGALATSVWLCLLCYF). Topologically, residues 125–133 (AFPFQLLIA) are extracellular. A helical membrane pass occupies residues 134-156 (STFIGAFCGNYTTFWGACFAYIV). The Cytoplasmic portion of the chain corresponds to 157–170 (DQCKEHKQKTIRIA). The helical transmembrane segment at 171–191 (IIDFLLGLVTGLTGLSSGYFI) threads the bilayer. Residues 192 to 197 (RELGFE) lie on the Extracellular side of the membrane. The chain crosses the membrane as a helical span at residues 198-218 (WSFLIIAVSLAVNLIYILFFL). Topologically, residues 219 to 261 (GDPVKECSSQNVTMSCSEGFKNLFYRTYMLFKNASGKRRFLLC) are cytoplasmic. The helical transmembrane segment at 262–282 (LLLFTVITYFFVVIGIAPIFI) threads the bilayer. Topologically, residues 283 to 294 (LYELDSPLCWNE) are extracellular. The helical transmembrane segment at 295-315 (VFIGYGSALGSASFLTSFLGI) threads the bilayer. Residues 316-324 (WLFSYCMED) are Cytoplasmic-facing. The chain crosses the membrane as a helical span at residues 325–345 (IHMAFIGIFTTMTGMAMTAFA). At 346 to 347 (ST) the chain is on the extracellular side. A helical transmembrane segment spans residues 348 to 368 (TLMMFLARVPFLFTIVPFSVL). Residues 369–382 (RSMLSKVVRSTEQG) are Cytoplasmic-facing. A helical transmembrane segment spans residues 383 to 403 (TLFACIAFLETLGGVTAVSTF). Residues 404–415 (NGIYSATVAWYP) lie on the Extracellular side of the membrane. The helical transmembrane segment at 416–436 (GFTFLLSAGLLLLPAISLCVV) threads the bilayer. Residues 437–461 (KCTSWNEGSYELLIQEESSEDASDR) are Cytoplasmic-facing. The Tyrosine-based lysosomal-sorting motif signature appears at 446-449 (YELL).

Belongs to the major facilitator superfamily. SLC46A family.

The protein localises to the lysosome membrane. The enzyme catalyses estrone 3-sulfate(out) + n H(+)(out) = estrone 3-sulfate(in) + n H(+)(in). The catalysed reaction is 25-hydroxyvitamin D3 sulfate(out) + n H(+)(out) = 25-hydroxyvitamin D3 sulfate(in) + n H(+)(in). It catalyses the reaction cholate(out) + n H(+)(out) = cholate(in) + n H(+)(in). It carries out the reaction glycocholate(out) + n H(+)(out) = glycocholate(in) + n H(+)(in). The enzyme catalyses taurocholate(out) + n H(+)(out) = taurocholate(in) + n H(+)(in). The catalysed reaction is dehydroepiandrosterone 3-sulfate(out) + n H(+)(out) = dehydroepiandrosterone 3-sulfate(in) + n H(+)(in). It catalyses the reaction N-acetyl-D-muramoyl-L-alanyl-D-isoglutamine(out) + n H(+)(out) = N-acetyl-D-muramoyl-L-alanyl-D-isoglutamine(in) + n H(+)(in). It carries out the reaction 2',3'-cGAMP(out) + n H(+)(out) = 2',3'-cGAMP(in) + n H(+)(in). Lysosomal proton-coupled steroid conjugate and bile acid transporter. Preferentially recognizes lipophilic steroid conjugates or bile acis as endogenous substrates and seems to mediate escape from lysosomes to the cytoplasm. Modulates hepatic cytosolic copper homeostasis, maybe acting as a lysosomal copper transporter and sequestering copper ions in the lysosome. Transports catabolites of non-cleavable antibody-drug conjugates from the lysosome to the cytoplasm. Delivers pathogen-associated molecular patterns to cytosolic pattern recognition receptors as part of the innate immune response to microbes. Selectively transports bacterial muramyl dipeptide (MDP) into the cytosol for recognition by NOD2, triggering inflammatory responses. Likely acts as a redundant importer of cyclic GMP-AMP dinucleotides (cGAMPs) in monocyte and macrophage cell lineages. The transport mechanism, its electrogenicity and stoichiometry remain to be elucidated. This chain is Lysosomal proton-coupled steroid conjugate and bile acid symporter SLC46A3, found in Homo sapiens (Human).